Here is a 258-residue protein sequence, read N- to C-terminus: Phosphosulfolactate synthase (258 aa).

Belongs to the phosphosulfolactate synthase family.

The catalysed reaction is (2R)-O-phospho-3-sulfolactate = phosphoenolpyruvate + sulfite + H(+). It participates in cofactor biosynthesis; coenzyme M biosynthesis; sulfoacetaldehyde from phosphoenolpyruvate and sulfite: step 1/4. Catalyzes the addition of sulfite to phosphoenolpyruvate (PEP) to yield (2R)-phospho-3-sulfolactate (PSL). This Methanothermobacter thermautotrophicus (strain ATCC 29096 / DSM 1053 / JCM 10044 / NBRC 100330 / Delta H) (Methanobacterium thermoautotrophicum) protein is Phosphosulfolactate synthase (comA).